A 516-amino-acid polypeptide reads, in one-letter code: Ammonium transporter Amt1 (516 aa).

The next 11 helical transmembrane spans lie at 17 to 37 (YVWILVVSFLIFFMQPGFALL), 59 to 79 (ALGVLVYFVVGAGVATIVGGL), 101 to 121 (IDWLFGAVFAMTAATIVSGAV), 130 to 150 (YVVFAATITGFIYPVVQGLTW), 170 to 190 (LDFAGATVVHMCGGVAGLVGA), 214 to 234 (MLLAVLGTLILAFGWYGFNVG), 258 to 278 (VALVTTLGMGAGAVAAMVVST), 286 to 306 (PLWMANGLLAGLVAVTGAVPH), 307 to 327 (VTWWGGLVLGALGGAIVLPAY), 342 to 362 (VFAVHGVAGAVGTALIPVFAV), and 374 to 394 (VAGVGIIALWTIVASAVVFAA). Positions 426–516 (IGESGPDRGV…SAAVDGGENQ (91 aa)) are disordered. Positions 445-491 (NDVRTDGGNDVRTDGGNDVRTDGGNDVRTDGGNDVRTDGGNDVRTDG) are enriched in basic and acidic residues.

The protein belongs to the ammonia transporter channel (TC 1.A.11.2) family. As to quaternary structure, homotrimer. Interacts with both GlnK1 and GlnK2 after ammonium shock. Interaction is rapid, reversible and dependent on nitrogen source.

It localises to the cell membrane. In terms of biological role, involved in the uptake of ammonium/ammonia (NH(4)(+)/NH(3)). Transport is electrogenic. In Haloferax mediterranei (strain ATCC 33500 / DSM 1411 / JCM 8866 / NBRC 14739 / NCIMB 2177 / R-4) (Halobacterium mediterranei), this protein is Ammonium transporter Amt1.